Here is a 117-residue protein sequence, read N- to C-terminus: Synaptobrevin homolog 1 (117 aa).

Residues 1–30 (MSSSTPFDPYALSEHDEERPQNVQSKSRTA) form a disordered region. The Cytoplasmic portion of the chain corresponds to 1-94 (MSSSTPFDPY…MWYKDLKMKM (94 aa)). The 61-residue stretch at 28–88 (RTAELQAEID…NRVRKAMWYK (61 aa)) folds into the v-SNARE coiled-coil homology domain. A Glycyl lysine isopeptide (Lys-Gly) (interchain with G-Cter in ubiquitin) cross-link involves residue K63. C95 carries the S-palmitoyl cysteine lipid modification. Residues 95–111 (CLALVIIILLVVIIVPI) form a helical; Anchor for type IV membrane protein membrane-spanning segment. Residues 112–117 (AVHFSR) are Vesicular-facing.

The protein belongs to the synaptobrevin family. Post-translationally, palmitoylated by SWF1.

The protein resides in the endomembrane system. Its function is as follows. SNC1 and SNC2 are vesicle-targeting proteins essential for normal secretory traffic between the Golgi and the plasma membrane. They may also be involved in vesicle fusion. This is Synaptobrevin homolog 1 (SNC1) from Saccharomyces cerevisiae (strain ATCC 204508 / S288c) (Baker's yeast).